The following is a 390-amino-acid chain: Lipid-A-disaccharide synthase (390 aa).

The protein belongs to the LpxB family.

It catalyses the reaction a lipid X + a UDP-2-N,3-O-bis[(3R)-3-hydroxyacyl]-alpha-D-glucosamine = a lipid A disaccharide + UDP + H(+). It functions in the pathway bacterial outer membrane biogenesis; LPS lipid A biosynthesis. Functionally, condensation of UDP-2,3-diacylglucosamine and 2,3-diacylglucosamine-1-phosphate to form lipid A disaccharide, a precursor of lipid A, a phosphorylated glycolipid that anchors the lipopolysaccharide to the outer membrane of the cell. In Rickettsia felis (strain ATCC VR-1525 / URRWXCal2) (Rickettsia azadi), this protein is Lipid-A-disaccharide synthase.